A 482-amino-acid polypeptide reads, in one-letter code: Membrane-bound lytic murein transglycosylase F (482 aa).

Positions 1–18 are cleaved as a signal peptide; it reads MKGLFIRIVLAICLSLWA. The non-LT domain stretch occupies residues 19–266; it reads IDMVFPWQQI…RIEEKYFNHL (248 aa). Residues 267–482 are LT domain; it reads NQFDYVDTRS…ISTQTQQEQR (216 aa). Glu311 is an active-site residue.

This sequence in the N-terminal section; belongs to the bacterial solute-binding protein 3 family. The protein in the C-terminal section; belongs to the transglycosylase Slt family.

It is found in the cell outer membrane. It carries out the reaction Exolytic cleavage of the (1-&gt;4)-beta-glycosidic linkage between N-acetylmuramic acid (MurNAc) and N-acetylglucosamine (GlcNAc) residues in peptidoglycan, from either the reducing or the non-reducing ends of the peptidoglycan chains, with concomitant formation of a 1,6-anhydrobond in the MurNAc residue.. Its function is as follows. Murein-degrading enzyme that degrades murein glycan strands and insoluble, high-molecular weight murein sacculi, with the concomitant formation of a 1,6-anhydromuramoyl product. Lytic transglycosylases (LTs) play an integral role in the metabolism of the peptidoglycan (PG) sacculus. Their lytic action creates space within the PG sacculus to allow for its expansion as well as for the insertion of various structures such as secretion systems and flagella. In Histophilus somni (strain 129Pt) (Haemophilus somnus), this protein is Membrane-bound lytic murein transglycosylase F.